The primary structure comprises 651 residues: Protein RcaC (651 aa).

Residues 2 to 116 (KILLVEDDDV…ELIARIRALL (115 aa)) enclose the Response regulatory 1 domain. D51 bears the 4-aspartylphosphate mark. The segment at residues 124–223 (FPLLTWGDLL…MHGRGYYLKA (100 aa)) is a DNA-binding region (ompR/PhoB-type). Response regulatory domains follow at residues 384–519 (LLLM…VNLL) and 527–643 (KVMI…LRRL).

Functionally, required for chromatic adaptation. Thought to be a positive regulator of phycobiliproteins. This chain is Protein RcaC (rcaC), found in Microchaete diplosiphon (Fremyella diplosiphon).